The sequence spans 370 residues: uncharacterized protein (370 aa).

The protein belongs to the metallo-dependent hydrolases superfamily.

This is an uncharacterized protein from Mycobacterium bovis (strain ATCC BAA-935 / AF2122/97).